The primary structure comprises 358 residues: DnaJ homolog subfamily B member 11 (358 aa).

An N-terminal signal peptide occupies residues 1 to 22; it reads MAPQNLGTLCLLLLYLLGAAIA. Positions 25–90 constitute a J domain; sequence DFYKILGVPR…EKRKQYDTYG (66 aa). Threonine 188 carries the phosphothreonine modification. Asparagine 261 carries an N-linked (GlcNAc...) asparagine glycan.

Part of a large chaperone multiprotein complex comprising DNAJB11, HSP90B1, HSPA5, HYOU, PDIA2, PDIA4, PDIA6, PPIB, SDF2L1, UGGT1 and very small amounts of ERP29, but not, or at very low levels, CALR nor CANX. Binds to denatured substrates in an ATP-independent manner. Interacts via the J domain with HSPA5 in an ATP-dependent manner. Contains high-mannose Endo H-sensitive carbohydrates. In terms of processing, cys-169, Cys-171, Cys-193 and Cys-196 form intramolecular disulfide bonds. The preferential partner for each Cys is not known. As to expression, pancreas.

It is found in the endoplasmic reticulum lumen. In terms of biological role, as a co-chaperone for HSPA5 it is required for proper folding, trafficking or degradation of proteins. Binds directly to both unfolded proteins that are substrates for ERAD and nascent unfolded peptide chains, but dissociates from the HSPA5-unfolded protein complex before folding is completed. May help recruiting HSPA5 and other chaperones to the substrate. Stimulates HSPA5 ATPase activity. It is necessary for maturation and correct trafficking of PKD1. This is DnaJ homolog subfamily B member 11 (DNAJB11) from Canis lupus familiaris (Dog).